Consider the following 580-residue polypeptide: Mucolipin-1 (580 aa).

Residues 1–38 are disordered; that stretch reads MTAPAGPRGSETERLLTPNPGYGTQAGPSPAPPTPPEE. The Cytoplasmic portion of the chain corresponds to 1–65; it reads MTAPAGPRGS…FRAKGRKPCK (65 aa). Residue serine 10 is modified to Phosphoserine. The short motif at 11–16 is the Dileucine motif; mediates targeting to lysosomes element; the sequence is ETERLL. Positions 42-62 are interaction with phosphoinositides; sequence RRRLKYFFMSPCDKFRAKGRK. The helical transmembrane segment at 66–86 threads the bilayer; sequence LMLQVVKILVVTVQLILFGLS. Residues 87 to 298 are Extracellular-facing; that stretch reads NQLAVTFREE…VFQHGDNSFR (212 aa). Positions 107–121 are extracellular/lumenal pore loop; sequence LGYSDGADDTFAAYT. Residues cysteine 166 and cysteine 192 are joined by a disulfide bond. N-linked (GlcNAc...) asparagine glycosylation is present at asparagine 230. A disulfide bond links cysteine 253 and cysteine 284. Residues 299-321 traverse the membrane as a helical segment; that stretch reads LLFDVVVILTCSLSFLLCARSLL. Topologically, residues 322-350 are cytoplasmic; sequence RGFLLQNEFVGFMWRQRGRVISLWERLEF. Residues 351 to 371 traverse the membrane as a helical segment; the sequence is VNGWYILLVTSDVLTISGTIM. The Extracellular portion of the chain corresponds to 372 to 382; that stretch reads KIGIEAKNLAS. Residues 383–405 traverse the membrane as a helical segment; the sequence is YDVCSILLGTSTLLVWVGVIRYL. Topologically, residues 406-427 are cytoplasmic; it reads TFFHNYNILIATLRVALPSVMR. Residues 428–448 form a helical membrane-spanning segment; sequence FCCCVAVIYLGYCFCGWIVLG. Residues 449–456 lie on the Extracellular side of the membrane; the sequence is PYHVKFRS. Residues 457–477 constitute an intramembrane region (pore-forming); it reads LSMVSECLFSLINGDDMFVTF. Residues 469-474 carry the Selectivity filter motif; sequence NGDDMF. At 478-491 the chain is on the extracellular side; the sequence is AAMQAQQGRSSLVW. Residues 492-513 form a helical membrane-spanning segment; the sequence is LFSQLYLYSFISLFIYMVLSLF. Residues 514-580 lie on the Cytoplasmic side of the membrane; sequence IALITGAYDT…PSEEHSLLVN (67 aa). Serine 557 and serine 559 each carry phosphoserine; by PAK. Residues 565 to 567 form a required for palmitoylation and association with membranes region; sequence CCC. Positions 573–578 match the Dileucine internalization motif; mediates AP2 complex-dependent internalization motif; it reads EEHSLL.

The protein belongs to the transient receptor (TC 1.A.4) family. Polycystin subfamily. MCOLN1 sub-subfamily. In terms of assembly, homotetramer. Homooligomer. Can heterooligomerize with MCOLN2 or MCOLN3; heteromeric assemblies have different channel properties as compared to the respective homooligomers and may be tissue-specific. Interacts with PDCD6. Interacts with TMEM163. Interacts with LAPTM4B. In terms of processing, palmitoylated; involved in association with membranes. Post-translationally, phosphorylation by PKA inhibits channel activity. Dephosphorylation increases activity. Proteolytically cleaved probably involving multiple lysosomal proteases including cathepsin B; inhibits lysosomal channel activity. Widely expressed in adult and fetal tissues.

The protein resides in the late endosome membrane. It localises to the lysosome membrane. It is found in the cytoplasmic vesicle membrane. Its subcellular location is the cell projection. The protein localises to the phagocytic cup. The protein resides in the cytoplasmic vesicle. It localises to the phagosome membrane. It is found in the cell membrane. It carries out the reaction Ca(2+)(in) = Ca(2+)(out). It catalyses the reaction Fe(2+)(in) = Fe(2+)(out). The enzyme catalyses Mg(2+)(in) = Mg(2+)(out). The catalysed reaction is K(+)(in) = K(+)(out). It carries out the reaction Na(+)(in) = Na(+)(out). Channel activity is controlled by multiple regulatory mechanisms in different subcellular compartments. Channel function is transiently modulated by changes in Ca(2+) in a pH-dependent manner; pH changes modify the aggregation state of unitary channels; a negative cooperativity between extracellular/lumenal Ca(2+) and H(+) is suggested. Regulated by phosphoinositides in a compartment-specific manner: in lysosomes activated by PtdIns(3,5)P2 (Phosphatidylinositol 3,5-bisphosphate) and at the plasma membrane inhibited by PtdIns(4,5)P2 (Phosphatidylinositol 4,5-bisphosphate). Functionally, nonselective cation channel probably playing a role in the regulation of membrane trafficking events and of metal homeostasis. Acts as a Ca(2+)-permeable cation channel with inwardly rectifying activity. Proposed to play a major role in Ca(2+) release from late endosome and lysosome vesicles to the cytoplasm, which is important for many lysosome-dependent cellular events, including the fusion and trafficking of these organelles, exocytosis and autophagy. Required for efficient uptake of large particles in macrophages in which Ca(2+) release from the lysosomes triggers lysosomal exocytosis. May also play a role in phagosome-lysosome fusion. Involved in lactosylceramide trafficking indicative for a role in the regulation of late endocytic membrane fusion/fission events. By mediating lysosomal Ca(2+) release is involved in regulation of mTORC1 signaling and in mTOR/TFEB-dependent lysosomal adaptation to environmental cues such as nutrient levels. Seems to act as lysosomal active oxygen species (ROS) sensor involved in ROS-induced TFEB activation and autophagy. Also functions as a Fe(2+) permeable channel in late endosomes and lysosomes. Also permeable to Mg(2+), Na(+). K(+) and Cs(+). Proposed to play a role in zinc homeostasis probably implicating its association with TMEM163 In adaptive immunity, TRPML2 and TRPML1 may play redundant roles in the function of the specialized lysosomes of B cells. In terms of biological role, may contribute to cellular lipase activity within the late endosomal pathway or at the cell surface which may be involved in processes of membrane reshaping and vesiculation, especially the growth of tubular structures. However, it is not known, whether it conveys the enzymatic activity directly, or merely facilitates the activity of an associated phospholipase. This Homo sapiens (Human) protein is Mucolipin-1.